We begin with the raw amino-acid sequence, 177 residues long: Large ribosomal subunit protein uL6 (177 aa).

This sequence belongs to the universal ribosomal protein uL6 family. As to quaternary structure, part of the 50S ribosomal subunit.

In terms of biological role, this protein binds to the 23S rRNA, and is important in its secondary structure. It is located near the subunit interface in the base of the L7/L12 stalk, and near the tRNA binding site of the peptidyltransferase center. The polypeptide is Large ribosomal subunit protein uL6 (Cupriavidus metallidurans (strain ATCC 43123 / DSM 2839 / NBRC 102507 / CH34) (Ralstonia metallidurans)).